We begin with the raw amino-acid sequence, 380 residues long: Erythronate-4-phosphate dehydrogenase (380 aa).

The substrate site is built by serine 45 and threonine 66. NAD(+) contacts are provided by residues 126–127 (QV), aspartate 146, threonine 174, 205–207 (ASR), and aspartate 231. Residue arginine 207 is part of the active site. Residue glutamate 236 is part of the active site. Histidine 253 (proton donor) is an active-site residue. Glycine 256 is a binding site for NAD(+). Tyrosine 257 contributes to the substrate binding site.

The protein belongs to the D-isomer specific 2-hydroxyacid dehydrogenase family. PdxB subfamily. As to quaternary structure, homodimer.

The protein resides in the cytoplasm. It carries out the reaction 4-phospho-D-erythronate + NAD(+) = (R)-3-hydroxy-2-oxo-4-phosphooxybutanoate + NADH + H(+). Its pathway is cofactor biosynthesis; pyridoxine 5'-phosphate biosynthesis; pyridoxine 5'-phosphate from D-erythrose 4-phosphate: step 2/5. In terms of biological role, catalyzes the oxidation of erythronate-4-phosphate to 3-hydroxy-2-oxo-4-phosphonooxybutanoate. In Azotobacter vinelandii (strain DJ / ATCC BAA-1303), this protein is Erythronate-4-phosphate dehydrogenase.